The sequence spans 319 residues: tRNA-modifying protein YgfZ (319 aa).

Folate contacts are provided by tryptophan 27 and tryptophan 189.

It belongs to the tRNA-modifying YgfZ family.

It localises to the cytoplasm. Folate-binding protein involved in regulating the level of ATP-DnaA and in the modification of some tRNAs. It is probably a key factor in regulatory networks that act via tRNA modification, such as initiation of chromosomal replication. The chain is tRNA-modifying protein YgfZ from Buchnera aphidicola subsp. Acyrthosiphon pisum (strain APS) (Acyrthosiphon pisum symbiotic bacterium).